A 118-amino-acid polypeptide reads, in one-letter code: MRVKRGNVARKRRKKILKLAKGFRGAGSKLFRTANQQVMKALRSAYRDRRRKKRDFRRLWITRINAATRAQGLRYHEFIDGLKKANIQLNRKMLARLAFLDPEAFTQVVEAARQSRAS.

Belongs to the bacterial ribosomal protein bL20 family.

Its function is as follows. Binds directly to 23S ribosomal RNA and is necessary for the in vitro assembly process of the 50S ribosomal subunit. It is not involved in the protein synthesizing functions of that subunit. The polypeptide is Large ribosomal subunit protein bL20 (Synechococcus sp. (strain JA-2-3B'a(2-13)) (Cyanobacteria bacterium Yellowstone B-Prime)).